A 919-amino-acid polypeptide reads, in one-letter code: Exostosin-like 3 (919 aa).

Over 1–30 (MTGYTMLRNGGAGNGGQTCMLRWSNRIRLT) the chain is Cytoplasmic. The segment at 1-140 (MTGYTMLRNG…LKNVISQTEH (140 aa)) is required for interaction with REG3A. A helical; Signal-anchor for type II membrane protein membrane pass occupies residues 31 to 51 (WLSFTLFVILVFFPLIAHYYL). Over 52 to 919 (TTLDEADEAG…HDKTKCFKFI (868 aa)) the chain is Lumenal. Cystine bridges form between cysteine 177–cysteine 182 and cysteine 188–cysteine 236. An N-linked (GlcNAc...) asparagine glycan is attached at asparagine 290. Residue serine 362 is modified to Phosphoserine. The cysteines at positions 400 and 415 are disulfide-linked. Asparagine 592 is a glycosylation site (N-linked (GlcNAc...) asparagine). Residues leucine 668, arginine 672, asparagine 697, asparagine 723, arginine 728, aspartate 744, aspartate 745, and aspartate 746 each contribute to the UDP-N-acetyl-alpha-D-glucosamine site. Aspartate 746 is a Mn(2+) binding site. Asparagine 790 carries an N-linked (GlcNAc...) asparagine glycan. Residues cysteine 831 and cysteine 879 are joined by a disulfide bond. UDP-N-acetyl-alpha-D-glucosamine contacts are provided by glutamate 832, aspartate 833, and arginine 876. Aspartate 833 is a catalytic residue.

The protein belongs to the glycosyltransferase 47 family. In terms of assembly, homodimer; disulfide-linked. Interacts with REG3A. Requires Mn(2+) as cofactor. As to expression, ubiquitous. Expressed in keratinocytes. Expressed in pancreas.

The protein localises to the endoplasmic reticulum membrane. Its subcellular location is the golgi apparatus. It is found in the cell membrane. The protein resides in the nucleus. It catalyses the reaction 3-O-(beta-D-GlcA-(1-&gt;3)-beta-D-Gal-(1-&gt;3)-beta-D-Gal-(1-&gt;4)-beta-D-Xyl)-L-seryl-[protein] + UDP-N-acetyl-alpha-D-glucosamine = 3-O-(alpha-D-GlcNAc-(1-&gt;4)-beta-D-GlcA-(1-&gt;3)-beta-D-Gal-(1-&gt;3)-beta-D-Gal-(1-&gt;4)-beta-D-Xyl)-L-seryl-[protein] + UDP + H(+). The protein operates within glycan metabolism; heparan sulfate biosynthesis. In terms of biological role, glycosyltransferase which regulates the biosynthesis of heparan sulfate (HS). Initiates HS synthesis by transferring the first N-acetyl-alpha-D-glucosamine (alpha-GlcNAc) residue (GlcNAcT-I activity) to the tetrasaccharide linker (GlcA-Gal-Gal-Xyl-)Ser core linker. May also transfer alpha-GlcNAc residues during HS elongation (GlcNAcT-II activity). Lacks glucuronyl transferase II (GlcAT-II) activity. Important for both skeletal development and hematopoiesis, through the formation of HS proteoglycans (HSPGs). Through the synthesis of HS, regulates postnatal pancreatic islet maturation and insulin secretion. Its function is as follows. Receptor for REG3A, REG3B and REG3G, induces the activation of downstream signaling pathways such as PI3K-AKT or RAS-RAF-MEK-ERK signaling pathway. Required for the function of REG3A in regulating keratinocyte proliferation and differentiation. Required for the inhibition of skin inflammation mediated by REG3A through the activation of PI3K-AKT-STAT3 pathway. Required for the function of REG3A and REG3G in glucose tolerance in pancreas. Expressed in microglia, is activated by nociceptor-derived REG3G in response to endotoxins, leading to the inhibition of kynurenine pathway to prevent endotoxic death. The protein is Exostosin-like 3 of Homo sapiens (Human).